Here is a 439-residue protein sequence, read N- to C-terminus: GTPase Der (439 aa).

EngA-type G domains follow at residues 2–168 (ATVL…EEKG) and 181–357 (IKIA…SSYT). GTP contacts are provided by residues 8-15 (GKPNVGKS), 55-59 (DTCGV), 118-121 (NKTE), 187-194 (GRPNVGKS), 234-238 (DTAGL), and 300-303 (NKWD). One can recognise a KH-like domain in the interval 358–439 (TKVPSSALNS…PIFLKFKKSR (82 aa)).

Belongs to the TRAFAC class TrmE-Era-EngA-EngB-Septin-like GTPase superfamily. EngA (Der) GTPase family. Associates with the 50S ribosomal subunit.

Its function is as follows. GTPase that plays an essential role in the late steps of ribosome biogenesis. This Thermotoga neapolitana (strain ATCC 49049 / DSM 4359 / NBRC 107923 / NS-E) protein is GTPase Der.